The primary structure comprises 172 residues: RNA pyrophosphohydrolase (172 aa).

Residues 6–149 (GFRANVGIII…KRDVYRKVMK (144 aa)) form the Nudix hydrolase domain. Residues 38-59 (GGLDDGESVEEAMYRELYEEVG) carry the Nudix box motif.

This sequence belongs to the Nudix hydrolase family. RppH subfamily. A divalent metal cation serves as cofactor.

Functionally, accelerates the degradation of transcripts by removing pyrophosphate from the 5'-end of triphosphorylated RNA, leading to a more labile monophosphorylated state that can stimulate subsequent ribonuclease cleavage. This chain is RNA pyrophosphohydrolase, found in Shewanella frigidimarina (strain NCIMB 400).